The sequence spans 137 residues: Ribosome-binding factor A (137 aa).

This sequence belongs to the RbfA family. Monomer. Binds 30S ribosomal subunits, but not 50S ribosomal subunits or 70S ribosomes.

The protein localises to the cytoplasm. Its function is as follows. One of several proteins that assist in the late maturation steps of the functional core of the 30S ribosomal subunit. Associates with free 30S ribosomal subunits (but not with 30S subunits that are part of 70S ribosomes or polysomes). Required for efficient processing of 16S rRNA. May interact with the 5'-terminal helix region of 16S rRNA. The polypeptide is Ribosome-binding factor A (Rhodopseudomonas palustris (strain BisB18)).